A 122-amino-acid polypeptide reads, in one-letter code: Gene 20 protein (122 aa).

This chain is Gene 20 protein (20), found in Mycobacterium phage D29 (Mycobacteriophage D29).